The primary structure comprises 438 residues: Prenyltransferase malE (438 aa).

A substrate-binding site is contributed by Glu92. Dimethylallyl diphosphate is bound by residues Arg106, Lys192, Tyr194, Lys259, Tyr261, Tyr346, and Tyr411.

Belongs to the tryptophan dimethylallyltransferase family.

The enzyme catalyses (S)-3-(indol-3-ylmethyl)-6,7,8,8a-tetrahydropyrrolo[1,2-a]pyrazin-1-one + dimethylallyl diphosphate = (S)-3-{[2-(1,1-dimethylallyl)-indol-3-yl]methyl}-6,7,8,8a-tetrahydropyrrolo[1,2-a]pyrazin-1-one + diphosphate. It carries out the reaction 1-hydroxy-3-(indol-3-ylmethyl)-6H,7H,8H-5lambda(5)-pyrrolo[1,2-a]pyrazine + dimethylallyl diphosphate = 1-hydroxy-3-{[2-(1,1-dimethylallyl)-indol-3-yl]methyl}-6H,7H,8H-5lambda(5)-pyrrolo[1,2-a]pyrazine + diphosphate. The protein operates within alkaloid biosynthesis. Functionally, prenyltransferase; part of the gene cluster that mediates the biosynthesis of malbrancheamide, a dichlorinated fungal indole alkaloid that belongs to a family of natural products containing a characteristic bicyclo[2.2.2]diazaoctane core. The first step of malbrancheamide biosynthesis involves coupling of L-proline and L-tryptophan by malG, a bimodular NRPS, to produce L-Pro-L-Trp aldehyde through reductive offloading. This compound undergoes spontaneous cyclization and dehydration to give a dienamine which is reverse prenylated at C-2 by malE. The other prenyltransferase present in the cluster, malB, displays modest activity, suggesting that may be a redundant gene in the pathway. Subsequently, a [4+2] Diels-Alder cyclo-addition catalyzed by the bifunctional enzyme malC forms the characteristic bicyclo[2.2.2]diazaoctane ring of premalbrancheamid. Finally, the flavin-dependent halogenase malA catalyzes the iterative dichlorination of the indole ring of premalbrancheamide to yield C-9 monochlorinated malbrancheamide B, C-8 monochlorinated isomalbrancheamide B, and dichlorinated malbrancheamide. MalA is also able to brominate premalbrancheamide at C-9 to yield malbrancheamide C, and, to a lesser extend, at C-8 to yield isomalbrancheamide C. Finally, malA can brominate C-9 monochlorinated malbrancheamide B at C-8 to yield malbrancheamide D, or C-8 monochlorinated isomalbrancheamide B at C-9 to produce isomalbrancheamide D. The protein is Prenyltransferase malE of Malbranchea aurantiaca.